Here is a 209-residue protein sequence, read N- to C-terminus: Ribosomal RNA large subunit methyltransferase E (209 aa).

5 residues coordinate S-adenosyl-L-methionine: Gly-63, Trp-65, Asp-83, Asp-99, and Asp-124. The Proton acceptor role is filled by Lys-164.

It belongs to the class I-like SAM-binding methyltransferase superfamily. RNA methyltransferase RlmE family.

Its subcellular location is the cytoplasm. The enzyme catalyses uridine(2552) in 23S rRNA + S-adenosyl-L-methionine = 2'-O-methyluridine(2552) in 23S rRNA + S-adenosyl-L-homocysteine + H(+). Functionally, specifically methylates the uridine in position 2552 of 23S rRNA at the 2'-O position of the ribose in the fully assembled 50S ribosomal subunit. The chain is Ribosomal RNA large subunit methyltransferase E from Photorhabdus laumondii subsp. laumondii (strain DSM 15139 / CIP 105565 / TT01) (Photorhabdus luminescens subsp. laumondii).